The following is a 184-amino-acid chain: Chromobox protein homolog hpl-1 (184 aa).

Over residues 1–13 the composition is skewed to polar residues; sequence MSRQNPVRSTRGN. Disordered stretches follow at residues 1–27 and 87–115; these read MSRQ…QDAP and AAKR…STSD. The Chromo domain maps to 37–95; sequence FVVEKVLNKRLTRGGSEYYIKWQGFPESECSWEPIENLQCDRMIQEYEKEAAKRTTRKR. The segment covering 99-115 has biased composition (polar residues); that stretch reads PQPSTSSSAELQPSTSD.

Interacts with histone demethylase spr-5. Interacts with chromobox protein homolog hpl-2. Interacts with histone H3 tails methylated at 'Lys-9' (H3K9me3) and 'Lys-23'(H3K23me2). Interacts with histone H1 variant his-24 (when monomethylated at 'Lys-14'); the interaction is direct. May interact with the REST corepressor rcor-1, histone deacetylase hda-1, and the histone demethylase lsd-1.

The protein resides in the nucleus. Functionally, seems to be involved in transcriptional silencing in heterochromatin-like complexes. Involved in epigenetic repression. Probably does not act as global transcriptional repressor. Plays a role in linking epigenetic regulation with the innate immune response. Acting in concert with chromobox protein homolog hpl-2 and histone H1 protein his-24, involved in reproduction, somatic gonad development, male tail development and vulval cell fate decisions; perhaps as a result of modulating expression of Hox genes mab-5 and egl-5. Role in growth and somatic gonad development is antagonized by histone-lysine N-methyltransferase set-2/SET1. Required for larval development, acting redundantly with hpl-2. Plays a role in the formation of the vulva and in fertility, acting together with a CoREST-like complex, and hpl-2. This is Chromobox protein homolog hpl-1 from Caenorhabditis elegans.